The chain runs to 510 residues: DNA nucleotidylexotransferase (510 aa).

Residues 1-22 are disordered; sequence MDPLQAVHLGPRKKRPRQLGTP. A Nuclear localization signal motif is present at residues 11 to 17; it reads PRKKRPR. One can recognise a BRCT domain in the interval 27–124; the sequence is PYDIRFRDLV…KPVEMMGRHQ (98 aa). Ser-134 carries the post-translational modification Phosphoserine. A mediates interaction with DNTTIP2 region spans residues 151-510; sequence SQYACQRRTT…DYIEPWERNA (360 aa). The involved in DNA binding stretch occupies residues 258-262; the sequence is VGLKT. A 2'-deoxyribonucleoside 5'-triphosphate contacts are provided by residues 333–338 and 342–345; these read GFRRGK and HDVD. 3 residues coordinate Mg(2+): Asp-343, Asp-345, and Asp-434. Residue 449-450 coordinates a 2'-deoxyribonucleoside 5'-triphosphate; the sequence is GW.

It belongs to the DNA polymerase type-X family. As to quaternary structure, interacts with PRP19 and DNTTIP1. Forms a ternary complex with DNTTIP2 and core histone. Released from this complex by PCNA. Interacts with TRERF1. It depends on Mg(2+) as a cofactor. As to expression, isoform TDT-L: Expressed in the thymus, and, at lower levels, in the bone marrow. Detected in both cycling and noncycling pro-B and pre-B cells (at protein level). Isoform TDT-S: Expressed in both cycling and noncycling pro-B, but not pre-B, cells (at protein level). Not detected in mature peripheral or germinal center B cells.

It is found in the nucleus. Its subcellular location is the cytoplasm. It carries out the reaction DNA(n) + a 2'-deoxyribonucleoside 5'-triphosphate = DNA(n+1) + diphosphate. In terms of biological role, transferase that catalyzes the nontemplated addition of nucleoside triphosphate to coding ends during V(D)J recombination (N addition). Involved in the generation of diversity in the antigen-binding region of immunoglobulin heavy and light chains and T-cell receptors during B- and T-cell development. Does not act on double-stranded DNA with blunt ends. Functionally, 3'-to-5' DNA exonuclease. Involved in the generation of diversity in the antigen-binding region of immunoglobulin heavy and light chains and T-cell receptors during B- and T-cell development. Acts on single-stranded and double-stranded DNA with 3' or 5' extensions, but not on double-stranded DNA with blunt ends. Attenuates not only isoform TDT-S-catalyzed N addition, but also P (palindromic) addition in coding joins. Lacks terminal transferase activity. This Mus musculus (Mouse) protein is DNA nucleotidylexotransferase (Dntt).